Here is a 220-residue protein sequence, read N- to C-terminus: UPF0502 protein VVA1225 (220 aa).

It belongs to the UPF0502 family.

The sequence is that of UPF0502 protein VVA1225 from Vibrio vulnificus (strain YJ016).